The primary structure comprises 211 residues: Uracil phosphoribosyltransferase (211 aa).

Residues R78, R103, and 130–138 (DPMLATGGT) each bind 5-phospho-alpha-D-ribose 1-diphosphate. Uracil is bound by residues I196 and 201-203 (GDA). D202 is a 5-phospho-alpha-D-ribose 1-diphosphate binding site.

This sequence belongs to the UPRTase family. Requires Mg(2+) as cofactor.

The catalysed reaction is UMP + diphosphate = 5-phospho-alpha-D-ribose 1-diphosphate + uracil. Its pathway is pyrimidine metabolism; UMP biosynthesis via salvage pathway; UMP from uracil: step 1/1. With respect to regulation, allosterically activated by GTP. In terms of biological role, catalyzes the conversion of uracil and 5-phospho-alpha-D-ribose 1-diphosphate (PRPP) to UMP and diphosphate. In Kineococcus radiotolerans (strain ATCC BAA-149 / DSM 14245 / SRS30216), this protein is Uracil phosphoribosyltransferase.